We begin with the raw amino-acid sequence, 472 residues long: Transmembrane protein 8B (472 aa).

The tract at residues 1-36 is disordered; sequence MNMPQSLGNQPLPPEPPSLGTPAEGPGTTSPPEHCW. Residues 1-233 are Extracellular-facing; the sequence is MNMPQSLGNQ…ADALTYGFQL (233 aa). 2 N-linked (GlcNAc...) asparagine glycosylation sites follow: N92 and N100. Positions 182–221 constitute an EGF-like domain; that stretch reads FLSPCVDDCGPYGQCKLLRTHNYLYAACECKAGWRGWGCT. Intrachain disulfides connect C186/C196, C190/C209, and C211/C220. Residues 234–254 form a helical membrane-spanning segment; the sequence is LSTLLLCLSNLMFLPPVVLAI. At 255–257 the chain is on the cytoplasmic side; that stretch reads RSR. A helical membrane pass occupies residues 258-277; sequence YVLEAAVYTFTMFFSTFYHA. At 278-292 the chain is on the extracellular side; it reads CDQPGIVVFCIMDYD. The chain crosses the membrane as a helical span at residues 293 to 313; it reads VLQFCDFLGSLMSVWVTVIAM. Residues 314 to 315 are Cytoplasmic-facing; the sequence is AR. The helical transmembrane segment at 316-336 threads the bilayer; that stretch reads LQPVVKQVLYLLGAMLLSMAL. Residues 337–342 are Extracellular-facing; sequence QLDRHG. Residues 343–363 form a helical membrane-spanning segment; sequence LWNLLGPSLFALGILATAWTV. At 364–379 the chain is on the cytoplasmic side; that stretch reads RSVRRRHCYPPTWRRW. Residues 380-400 form a helical membrane-spanning segment; the sequence is LFYLCPGSLIAGSAVLLYAFV. Over 401–405 the chain is Extracellular; sequence ETRDN. Residues 406-426 traverse the membrane as a helical segment; that stretch reads YFYIHSIWHMLIAGSVGFLLP. Residues 427–472 are Cytoplasmic-facing; the sequence is PRAKTDHGVPSGARARGCGYQLCINEQEELGLVGPGGATVSSICAS.

It belongs to the TMEM8 family. In terms of assembly, isoform 2 (via its cytoplasmic part) interacts with EZR. In terms of processing, isoform 2 is N-glycosylated.

The protein localises to the cell membrane. It is found in the cytoplasm. It localises to the nucleus. The protein resides in the mitochondrion. Its subcellular location is the endoplasmic reticulum. Its function is as follows. May function as a regulator of the EGFR pathway. Probable tumor suppressor which may function in cell growth, proliferation and adhesion. In Homo sapiens (Human), this protein is Transmembrane protein 8B (TMEM8B).